We begin with the raw amino-acid sequence, 77 residues long: Sec-independent protein translocase protein TatA 2 (77 aa).

The helical transmembrane segment at 2-22 threads the bilayer; sequence FPGGISMTELIIILAVILLLF. A disordered region spans residues 52-77; it reads KEVKAEDVKTEERKEEKKEEKEKVEA.

This sequence belongs to the TatA/E family. Forms a complex with TatC.

It localises to the cell inner membrane. Functionally, part of the twin-arginine translocation (Tat) system that transports large folded proteins containing a characteristic twin-arginine motif in their signal peptide across membranes. TatA could form the protein-conducting channel of the Tat system. The polypeptide is Sec-independent protein translocase protein TatA 2 (Aquifex aeolicus (strain VF5)).